We begin with the raw amino-acid sequence, 313 residues long: MSKMMVFTGNANPDLARRVVRQLHIPLGDVSVGKFSDGEISTEINENVRGKDVFIIQPTCAPTNDNLMELVVMADAFRRSSASRITAVIPYFGYARQDRRPRSARVAISAKVVADMLTVVGIDRVLTVDLHADQIQGFFDIPVDNIYGSPVLVDDIEDQRFENLMIVSPDIGGVVRARAVAKSLGVDLGIIDKRREKANHSEVMHIIGDVEGRTCILVDDMVDTAGTLCHAAKALKEHGAAKVFAYCTHPVLSGRAIENIENSVLDELVVTNTIPLSAAAQACSRIRQLDIAPVVAEAVRRISNEESISAMFR.

ATP is bound by residues 37–39 and 96–97; these read DGE and RQ. Residues histidine 131 and aspartate 170 each contribute to the Mg(2+) site. Residue lysine 193 is part of the active site. D-ribose 5-phosphate contacts are provided by residues arginine 195, aspartate 219, and 223–227; that span reads DTAGT.

Belongs to the ribose-phosphate pyrophosphokinase family. Class I subfamily. As to quaternary structure, homohexamer. It depends on Mg(2+) as a cofactor.

Its subcellular location is the cytoplasm. It carries out the reaction D-ribose 5-phosphate + ATP = 5-phospho-alpha-D-ribose 1-diphosphate + AMP + H(+). Its pathway is metabolic intermediate biosynthesis; 5-phospho-alpha-D-ribose 1-diphosphate biosynthesis; 5-phospho-alpha-D-ribose 1-diphosphate from D-ribose 5-phosphate (route I): step 1/1. Involved in the biosynthesis of the central metabolite phospho-alpha-D-ribosyl-1-pyrophosphate (PRPP) via the transfer of pyrophosphoryl group from ATP to 1-hydroxyl of ribose-5-phosphate (Rib-5-P). The chain is Ribose-phosphate pyrophosphokinase from Pseudomonas syringae pv. tomato (strain ATCC BAA-871 / DC3000).